Reading from the N-terminus, the 153-residue chain is 3-hydroxyacyl-[acyl-carrier-protein] dehydratase FabZ (153 aa).

His54 is an active-site residue.

It belongs to the thioester dehydratase family. FabZ subfamily.

The protein resides in the cytoplasm. It catalyses the reaction a (3R)-hydroxyacyl-[ACP] = a (2E)-enoyl-[ACP] + H2O. In terms of biological role, involved in unsaturated fatty acids biosynthesis. Catalyzes the dehydration of short chain beta-hydroxyacyl-ACPs and long chain saturated and unsaturated beta-hydroxyacyl-ACPs. In Chlamydia trachomatis serovar L2 (strain ATCC VR-902B / DSM 19102 / 434/Bu), this protein is 3-hydroxyacyl-[acyl-carrier-protein] dehydratase FabZ.